The primary structure comprises 883 residues: Alanine--tRNA ligase (883 aa).

His-562, His-566, Cys-675, and His-679 together coordinate Zn(2+).

Belongs to the class-II aminoacyl-tRNA synthetase family. The cofactor is Zn(2+).

The protein localises to the cytoplasm. The enzyme catalyses tRNA(Ala) + L-alanine + ATP = L-alanyl-tRNA(Ala) + AMP + diphosphate. In terms of biological role, catalyzes the attachment of alanine to tRNA(Ala) in a two-step reaction: alanine is first activated by ATP to form Ala-AMP and then transferred to the acceptor end of tRNA(Ala). Also edits incorrectly charged Ser-tRNA(Ala) and Gly-tRNA(Ala) via its editing domain. In Ruegeria sp. (strain TM1040) (Silicibacter sp.), this protein is Alanine--tRNA ligase.